A 342-amino-acid polypeptide reads, in one-letter code: Methionine import ATP-binding protein MetN 3 (342 aa).

In terms of domain architecture, ABC transporter spans 2-241 (ISLKGISKTF…PKEQMTKEFV (240 aa)). 38–45 (GYSGAGKS) lines the ATP pocket.

It belongs to the ABC transporter superfamily. Methionine importer (TC 3.A.1.24) family. In terms of assembly, the complex is composed of two ATP-binding proteins (MetN), two transmembrane proteins (MetI) and a solute-binding protein (MetQ).

The protein resides in the cell membrane. It catalyses the reaction L-methionine(out) + ATP + H2O = L-methionine(in) + ADP + phosphate + H(+). It carries out the reaction D-methionine(out) + ATP + H2O = D-methionine(in) + ADP + phosphate + H(+). Functionally, part of the ABC transporter complex MetNIQ involved in methionine import. Responsible for energy coupling to the transport system. The sequence is that of Methionine import ATP-binding protein MetN 3 from Shouchella clausii (strain KSM-K16) (Alkalihalobacillus clausii).